Consider the following 317-residue polypeptide: MLNPQLNRHGELIHLLSTEGLPRRIIEQILDLAATFVPAPGQEFPKLPLLHGKSVFNLFFENSTRTRTTFEIAAKRLSADVVNLNIAASSTSKGESLLDTIANLSAMQAGLFVVRHGASGAPYLIAQHVAPHVHVINAGDGRHAHPTQALLDMYTIRHHKGDFNQLTVAIVGDVLHSRVARSDIHALTTLGVPEVRVVAPATLLPEGLAQMGVRVCTDMEEGLRDADVVIMLRLQNERMRGALLPSAHEYFKHYGLTQARLALARPDAIVMHPGPMNRGVEIASEVADSGQAVILDQVTFGIAVRMAAMSLVAGVRP.

Positions 65 and 66 each coordinate carbamoyl phosphate. Residue K93 participates in L-aspartate binding. Residues R115, H145, and Q148 each coordinate carbamoyl phosphate. L-aspartate contacts are provided by R178 and R233. Residues G274 and P275 each contribute to the carbamoyl phosphate site.

It belongs to the aspartate/ornithine carbamoyltransferase superfamily. ATCase family. Heterododecamer (2C3:3R2) of six catalytic PyrB chains organized as two trimers (C3), and six regulatory PyrI chains organized as three dimers (R2).

The enzyme catalyses carbamoyl phosphate + L-aspartate = N-carbamoyl-L-aspartate + phosphate + H(+). It participates in pyrimidine metabolism; UMP biosynthesis via de novo pathway; (S)-dihydroorotate from bicarbonate: step 2/3. Functionally, catalyzes the condensation of carbamoyl phosphate and aspartate to form carbamoyl aspartate and inorganic phosphate, the committed step in the de novo pyrimidine nucleotide biosynthesis pathway. This Bordetella parapertussis (strain 12822 / ATCC BAA-587 / NCTC 13253) protein is Aspartate carbamoyltransferase catalytic subunit.